The following is a 212-amino-acid chain: Pyridoxine/pyridoxamine 5'-phosphate oxidase (212 aa).

Substrate-binding positions include 8–11 and Lys66; that span reads RREY. FMN is bound by residues 61–66, 76–77, Arg82, Lys83, and Gln105; these read RIVLLK and FT. Substrate contacts are provided by Tyr123, Arg127, and Ser131. Residues 140-141 and Trp185 contribute to the FMN site; that span reads QS. Position 191–193 (191–193) interacts with substrate; it reads RLH. Arg195 contributes to the FMN binding site.

It belongs to the pyridoxamine 5'-phosphate oxidase family. In terms of assembly, homodimer. FMN serves as cofactor.

It catalyses the reaction pyridoxamine 5'-phosphate + O2 + H2O = pyridoxal 5'-phosphate + H2O2 + NH4(+). The catalysed reaction is pyridoxine 5'-phosphate + O2 = pyridoxal 5'-phosphate + H2O2. Its pathway is cofactor metabolism; pyridoxal 5'-phosphate salvage; pyridoxal 5'-phosphate from pyridoxamine 5'-phosphate: step 1/1. The protein operates within cofactor metabolism; pyridoxal 5'-phosphate salvage; pyridoxal 5'-phosphate from pyridoxine 5'-phosphate: step 1/1. In terms of biological role, catalyzes the oxidation of either pyridoxine 5'-phosphate (PNP) or pyridoxamine 5'-phosphate (PMP) into pyridoxal 5'-phosphate (PLP). This Shewanella halifaxensis (strain HAW-EB4) protein is Pyridoxine/pyridoxamine 5'-phosphate oxidase.